The primary structure comprises 91 residues: Cell division protein FtsB (91 aa).

Residues 1–3 are Cytoplasmic-facing; that stretch reads MRW. Residues 4 to 21 traverse the membrane as a helical segment; sequence PLIVLAVLVIVLQYPLWL. The Periplasmic segment spans residues 22 to 91; that stretch reads GKGGWLRVWD…EIFVHTPRKP (70 aa). The stretch at 28-74 forms a coiled coil; the sequence is RVWDVDRQLQAQRETNQRLEQRNAGLEAEVRDLKSGNEAVEERARFE.

Belongs to the FtsB family. As to quaternary structure, part of a complex composed of FtsB, FtsL and FtsQ.

It is found in the cell inner membrane. In terms of biological role, essential cell division protein. May link together the upstream cell division proteins, which are predominantly cytoplasmic, with the downstream cell division proteins, which are predominantly periplasmic. This chain is Cell division protein FtsB, found in Aromatoleum aromaticum (strain DSM 19018 / LMG 30748 / EbN1) (Azoarcus sp. (strain EbN1)).